Consider the following 404-residue polypeptide: Argininosuccinate synthase (404 aa).

Residues 10-18 (AYSGGVDTS) and Ala-38 contribute to the ATP site. Residue Tyr-89 participates in L-citrulline binding. Position 119 (Gly-119) interacts with ATP. Positions 121, 125, and 126 each coordinate L-aspartate. Asn-125 lines the L-citrulline pocket. 5 residues coordinate L-citrulline: Arg-129, Ser-177, Ser-186, Glu-262, and Tyr-274.

The protein belongs to the argininosuccinate synthase family. Type 1 subfamily. Homotetramer.

Its subcellular location is the cytoplasm. The enzyme catalyses L-citrulline + L-aspartate + ATP = 2-(N(omega)-L-arginino)succinate + AMP + diphosphate + H(+). The protein operates within amino-acid biosynthesis; L-arginine biosynthesis; L-arginine from L-ornithine and carbamoyl phosphate: step 2/3. In Prochlorococcus marinus (strain MIT 9515), this protein is Argininosuccinate synthase.